The chain runs to 180 residues: NEDD8-conjugating enzyme ubc-12 (180 aa).

The UBC core domain maps to 24-180 (VRDKLLAQEL…RVREYISRYC (157 aa)). Cys-112 (glycyl thioester intermediate) is an active-site residue.

Belongs to the ubiquitin-conjugating enzyme family. UBC12 subfamily.

It is found in the cytoplasm. The enzyme catalyses [E1 NEDD8-activating enzyme]-S-[NEDD8 protein]-yl-L-cysteine + [E2 NEDD8-conjugating enzyme]-L-cysteine = [E1 NEDD8-activating enzyme]-L-cysteine + [E2 NEDD8-conjugating enzyme]-S-[NEDD8-protein]-yl-L-cysteine.. It participates in protein modification; protein neddylation. Accepts the ubiquitin-like protein NEDD8 from the uba-3-ula-1 E1 complex and catalyzes its covalent attachment to other proteins. Plays a role in male tail tip morphogenesis. In Caenorhabditis elegans, this protein is NEDD8-conjugating enzyme ubc-12.